A 133-amino-acid polypeptide reads, in one-letter code: MLDWRLASAHFILAVTLTLWSSGKVLSVDVTTTEAFDSGVIDVQSTPTVREEKSATDLTAKLLLLDELVSLENDVIETKKKRSFSGFGSPLDRLSAGSVDHKGKQRKVVDHPKRRFGIPMDRIGRNRLSNSRG.

An N-terminal signal peptide occupies residues 1 to 27 (MLDWRLASAHFILAVTLTLWSSGKVLS). Position 132 is an arginine amide (Arg-132).

This sequence belongs to the Osteocrin family. As to quaternary structure, interacts with NPR3. As to expression, enriched in neocortical regions of the developing cerebral cortex. Not expressed in other compartments of the neocortical wall or in brain regions such as the hippocampus, striatum, mediodorsal nucleus of the thalamus and cerebellum. Also expressed in bone. In developing neonatal rib bone, present at high level in osteoblasts on bone-forming surfaces, in newly incorporated osteocytes and in some late hypertrophic chondrocytes (at protein level). In adult bone, localizes specifically to osteoblasts and young osteocytes at bone-forming sites (at protein level).

The protein resides in the secreted. Functionally, hormone that acts as a regulator of dendritic growth in the developing cerebral cortex in response to sensory experience. Induced in the brain following membrane depolarization and inhibits dendritic branching in neurons of the developing cortex. Probably acts by binding to natriuretic peptide receptor NPR3/NPR-C, thereby preventing binding between NPR3/NPR-C and natriuretic peptides, leading to increase cGMP production. This chain is Osteocrin, found in Homo sapiens (Human).